A 154-amino-acid polypeptide reads, in one-letter code: AP-1 complex subunit sigma-3 (154 aa).

It belongs to the adaptor complexes small subunit family. In terms of assembly, adaptor protein complex 1 (AP-1) is a heterotetramer composed of two large adaptins (gamma-type subunit AP1G1 and beta-type subunit AP1B1), a medium adaptin (mu-type subunit AP1M1 or AP1M2) and a small adaptin (sigma-type subunit AP1S1 or AP1S2 or AP1S3).

It localises to the golgi apparatus. The protein localises to the cytoplasmic vesicle membrane. The protein resides in the membrane. It is found in the clathrin-coated pit. In terms of biological role, subunit of clathrin-associated adaptor protein complex 1 that plays a role in protein sorting in the late-Golgi/trans-Golgi network (TGN) and/or endosomes. The AP complexes mediate both the recruitment of clathrin to membranes and the recognition of sorting signals within the cytosolic tails of transmembrane cargo molecules. Involved in TLR3 trafficking. The sequence is that of AP-1 complex subunit sigma-3 (Ap1s3) from Mus musculus (Mouse).